The primary structure comprises 833 residues: Leucine--tRNA ligase (833 aa).

A 'HIGH' region motif is present at residues 41–52 (PYPSGAGLHVGH). Positions 610 to 614 (KMSKS) match the 'KMSKS' region motif. Residue lysine 613 coordinates ATP.

Belongs to the class-I aminoacyl-tRNA synthetase family.

The protein resides in the cytoplasm. It catalyses the reaction tRNA(Leu) + L-leucine + ATP = L-leucyl-tRNA(Leu) + AMP + diphosphate. The polypeptide is Leucine--tRNA ligase (Streptococcus mutans serotype c (strain ATCC 700610 / UA159)).